We begin with the raw amino-acid sequence, 167 residues long: NAD(P)H-quinone oxidoreductase subunit I, chloroplastic (167 aa).

2 consecutive 4Fe-4S ferredoxin-type domains span residues glycine 55 to lysine 84 and leucine 95 to glutamate 124. [4Fe-4S] cluster contacts are provided by cysteine 64, cysteine 67, cysteine 70, cysteine 74, cysteine 104, cysteine 107, cysteine 110, and cysteine 114.

Belongs to the complex I 23 kDa subunit family. In terms of assembly, NDH is composed of at least 16 different subunits, 5 of which are encoded in the nucleus. [4Fe-4S] cluster is required as a cofactor.

The protein localises to the plastid. The protein resides in the chloroplast thylakoid membrane. It catalyses the reaction a plastoquinone + NADH + (n+1) H(+)(in) = a plastoquinol + NAD(+) + n H(+)(out). The catalysed reaction is a plastoquinone + NADPH + (n+1) H(+)(in) = a plastoquinol + NADP(+) + n H(+)(out). Functionally, NDH shuttles electrons from NAD(P)H:plastoquinone, via FMN and iron-sulfur (Fe-S) centers, to quinones in the photosynthetic chain and possibly in a chloroplast respiratory chain. The immediate electron acceptor for the enzyme in this species is believed to be plastoquinone. Couples the redox reaction to proton translocation, and thus conserves the redox energy in a proton gradient. This Lepidium virginicum (Virginia pepperweed) protein is NAD(P)H-quinone oxidoreductase subunit I, chloroplastic.